We begin with the raw amino-acid sequence, 185 residues long: MVNDVLREAESRMKKATEALRNHLATIRTGRASPALVEHLHVEAYGATLPLNQLATITVPEPRMLVIQPFDANTVKAISKAIMNSELGITPTDDGRLIRLAIPQLTEARRKELTKLVRARVEESKVALRNIRREALEDLRDLEHEKMISEDEHRRAQEKLQELTDRYVRELDHIGATKEAEVMEI.

Belongs to the RRF family.

The protein resides in the cytoplasm. In terms of biological role, responsible for the release of ribosomes from messenger RNA at the termination of protein biosynthesis. May increase the efficiency of translation by recycling ribosomes from one round of translation to another. This Roseiflexus castenholzii (strain DSM 13941 / HLO8) protein is Ribosome-recycling factor.